The sequence spans 272 residues: Phosphatidylglycerol--prolipoprotein diacylglyceryl transferase (272 aa).

The next 4 membrane-spanning stretches (helical) occupy residues Leu15–Phe35, Ala53–Val73, Ile90–Val110, and Val117–Ala137. Residue Arg138 coordinates a 1,2-diacyl-sn-glycero-3-phospho-(1'-sn-glycerol). Transmembrane regions (helical) follow at residues Phe174–Val194, Val199–Gly219, and Phe237–Ala257.

The protein belongs to the Lgt family.

The protein localises to the cell membrane. It carries out the reaction L-cysteinyl-[prolipoprotein] + a 1,2-diacyl-sn-glycero-3-phospho-(1'-sn-glycerol) = an S-1,2-diacyl-sn-glyceryl-L-cysteinyl-[prolipoprotein] + sn-glycerol 1-phosphate + H(+). It participates in protein modification; lipoprotein biosynthesis (diacylglyceryl transfer). Functionally, catalyzes the transfer of the diacylglyceryl group from phosphatidylglycerol to the sulfhydryl group of the N-terminal cysteine of a prolipoprotein, the first step in the formation of mature lipoproteins. The chain is Phosphatidylglycerol--prolipoprotein diacylglyceryl transferase from Tropheryma whipplei (strain Twist) (Whipple's bacillus).